Here is an 820-residue protein sequence, read N- to C-terminus: Scavenger receptor class F member 1 (820 aa).

The first 23 residues, 1–23, serve as a signal peptide directing secretion; sequence MLAAMGLELVFSLLLLWTQGTQG. Residues 24–422 lie on the Extracellular side of the membrane; sequence STLDPAGQHV…TCQLGRHGKN (399 aa). EGF-like domains follow at residues 56–90, 98–133, 163–193, and 217–251; these read TIPI…AQCS, WGHD…RLCE, RRPC…RRCS, and WGPE…IRCE. 12 disulfides stabilise this stretch: Cys60-Cys72, Cys66-Cys78, Cys80-Cys89, Cys102-Cys114, Cys108-Cys121, Cys123-Cys132, Cys166-Cys174, Cys168-Cys181, Cys183-Cys192, Cys221-Cys232, Cys225-Cys239, and Cys241-Cys250. N-linked (GlcNAc...) asparagine glycosylation occurs at Asn291. EGF-like domains lie at 304–341 and 353–384; these read FGER…HRCE and CSST…TSCN. The chain crosses the membrane as a helical span at residues 423-443; it reads ALIVGILVPLLLLLMGIVCCA. The Cytoplasmic segment spans residues 444 to 820; that stretch reads YCCSGTRLDP…VVPMSVPPQH (377 aa). 2 disordered regions span residues 549-685 and 715-820; these read PMAQ…IQES and NYQK…PPQH. 2 positions are modified to phosphoserine: Ser590 and Ser607. Positions 631 to 648 are enriched in acidic residues; it reads QEAEESTGPEQVNTEEDA. The segment covering 650 to 662 has biased composition (polar residues); that stretch reads TATSSGDPATSHG.

Heterophilic interaction with SREC2 via its extracellular domain. The heterophilic interaction is suppressed by the presence of ligand such as Ac-LDL. Interacts with AVIL; the interaction occurs in embryonic dorsal root ganglions at 18 dpc and induces neurite-like outgrowth. As to expression, expressed weakly in brain, spinal cord and dorsal root ganglions.

It is found in the membrane. In terms of biological role, mediates the binding and degradation of acetylated low density lipoprotein (Ac-LDL). Mediates heterophilic interactions, suggesting a function as adhesion protein. Plays a role in the regulation of neurite-like outgrowth. The protein is Scavenger receptor class F member 1 (Scarf1) of Mus musculus (Mouse).